Here is a 118-residue protein sequence, read N- to C-terminus: Small ribosomal subunit protein uS13 (118 aa).

The segment at 93–118 (KGLPVRGQRTKTNARTRKGPRKPIRK) is disordered.

The protein belongs to the universal ribosomal protein uS13 family. In terms of assembly, part of the 30S ribosomal subunit. Forms a loose heterodimer with protein S19. Forms two bridges to the 50S subunit in the 70S ribosome.

Its function is as follows. Located at the top of the head of the 30S subunit, it contacts several helices of the 16S rRNA. In the 70S ribosome it contacts the 23S rRNA (bridge B1a) and protein L5 of the 50S subunit (bridge B1b), connecting the 2 subunits; these bridges are implicated in subunit movement. Contacts the tRNAs in the A and P-sites. This Ectopseudomonas mendocina (strain ymp) (Pseudomonas mendocina) protein is Small ribosomal subunit protein uS13.